We begin with the raw amino-acid sequence, 226 residues long: Orotate phosphoribosyltransferase (226 aa).

5-phospho-alpha-D-ribose 1-diphosphate is bound by residues Arg107, Lys108, Lys111, and Glu133–Ser141. Thr137 contacts orotate.

This sequence belongs to the purine/pyrimidine phosphoribosyltransferase family. PyrE subfamily. In terms of assembly, homodimer. Mg(2+) is required as a cofactor.

The catalysed reaction is orotidine 5'-phosphate + diphosphate = orotate + 5-phospho-alpha-D-ribose 1-diphosphate. It participates in pyrimidine metabolism; UMP biosynthesis via de novo pathway; UMP from orotate: step 1/2. Functionally, catalyzes the transfer of a ribosyl phosphate group from 5-phosphoribose 1-diphosphate to orotate, leading to the formation of orotidine monophosphate (OMP). In Dinoroseobacter shibae (strain DSM 16493 / NCIMB 14021 / DFL 12), this protein is Orotate phosphoribosyltransferase.